A 227-amino-acid chain; its full sequence is Cytochrome c oxidase subunit 2 (227 aa).

Residues 1–14 (MAYPMQLGFQDATS) are Mitochondrial intermembrane-facing. A helical membrane pass occupies residues 15–45 (PIMEELLHFHDHTLMIVFLISSLVLYIISLM). Over 46–59 (LTTKLTHTSTMDAQ) the chain is Mitochondrial matrix. A helical membrane pass occupies residues 60 to 87 (EVETVWTILPAIILIMIALPSLRILYMM). The Mitochondrial intermembrane portion of the chain corresponds to 88–227 (DEINNPSLTV…YFEKWSASML (140 aa)). Histidine 161, cysteine 196, glutamate 198, cysteine 200, histidine 204, and methionine 207 together coordinate Cu cation. Glutamate 198 contacts Mg(2+). At tyrosine 218 the chain carries Phosphotyrosine.

Belongs to the cytochrome c oxidase subunit 2 family. In terms of assembly, component of the cytochrome c oxidase (complex IV, CIV), a multisubunit enzyme composed of 14 subunits. The complex is composed of a catalytic core of 3 subunits MT-CO1, MT-CO2 and MT-CO3, encoded in the mitochondrial DNA, and 11 supernumerary subunits COX4I, COX5A, COX5B, COX6A, COX6B, COX6C, COX7A, COX7B, COX7C, COX8 and NDUFA4, which are encoded in the nuclear genome. The complex exists as a monomer or a dimer and forms supercomplexes (SCs) in the inner mitochondrial membrane with NADH-ubiquinone oxidoreductase (complex I, CI) and ubiquinol-cytochrome c oxidoreductase (cytochrome b-c1 complex, complex III, CIII), resulting in different assemblies (supercomplex SCI(1)III(2)IV(1) and megacomplex MCI(2)III(2)IV(2)). Found in a complex with TMEM177, COA6, COX18, COX20, SCO1 and SCO2. Interacts with TMEM177 in a COX20-dependent manner. Interacts with COX20. Interacts with COX16. Cu cation serves as cofactor.

The protein localises to the mitochondrion inner membrane. The catalysed reaction is 4 Fe(II)-[cytochrome c] + O2 + 8 H(+)(in) = 4 Fe(III)-[cytochrome c] + 2 H2O + 4 H(+)(out). Its function is as follows. Component of the cytochrome c oxidase, the last enzyme in the mitochondrial electron transport chain which drives oxidative phosphorylation. The respiratory chain contains 3 multisubunit complexes succinate dehydrogenase (complex II, CII), ubiquinol-cytochrome c oxidoreductase (cytochrome b-c1 complex, complex III, CIII) and cytochrome c oxidase (complex IV, CIV), that cooperate to transfer electrons derived from NADH and succinate to molecular oxygen, creating an electrochemical gradient over the inner membrane that drives transmembrane transport and the ATP synthase. Cytochrome c oxidase is the component of the respiratory chain that catalyzes the reduction of oxygen to water. Electrons originating from reduced cytochrome c in the intermembrane space (IMS) are transferred via the dinuclear copper A center (CU(A)) of subunit 2 and heme A of subunit 1 to the active site in subunit 1, a binuclear center (BNC) formed by heme A3 and copper B (CU(B)). The BNC reduces molecular oxygen to 2 water molecules using 4 electrons from cytochrome c in the IMS and 4 protons from the mitochondrial matrix. The sequence is that of Cytochrome c oxidase subunit 2 (MT-CO2) from Capra hircus (Goat).